A 492-amino-acid polypeptide reads, in one-letter code: WD repeat-containing protein JIP5 (492 aa).

WD repeat units follow at residues Arg127–Lys166, Lys178–Ser217, Arg236–Ser274, Asp276–Gln317, and Arg365–Asn405. Acidic residues-rich tracts occupy residues Glu404–Glu414 and Asp422–Thr433. The interval Glu404–Met472 is disordered. A compositionally biased stretch (basic and acidic residues) spans Lys449–Asn462.

Belongs to the WD repeat WDR55 family. Interacts with BRE1, BUD27 and GIS1.

Its subcellular location is the nucleus. The protein resides in the nucleolus. The sequence is that of WD repeat-containing protein JIP5 (JIP5) from Saccharomyces cerevisiae (strain YJM789) (Baker's yeast).